The following is a 312-amino-acid chain: 2,3-dihydroxyphenylpropionate/2,3-dihydroxicinnamic acid 1,2-dioxygenase (312 aa).

The active-site Proton donor is H115. H179 serves as the catalytic Proton acceptor.

It belongs to the LigB/MhpB extradiol dioxygenase family. As to quaternary structure, homotetramer. Fe(2+) is required as a cofactor.

The enzyme catalyses 3-(2,3-dihydroxyphenyl)propanoate + O2 = (2Z,4E)-2-hydroxy-6-oxonona-2,4-dienedioate + H(+). The catalysed reaction is (2E)-3-(2,3-dihydroxyphenyl)prop-2-enoate + O2 = (2Z,4E,7E)-2-hydroxy-6-oxonona-2,4,7-trienedioate + H(+). It functions in the pathway aromatic compound metabolism; 3-phenylpropanoate degradation. Functionally, catalyzes the non-heme iron(II)-dependent oxidative cleavage of 2,3-dihydroxyphenylpropionic acid and 2,3-dihydroxicinnamic acid into 2-hydroxy-6-ketononadienedioate and 2-hydroxy-6-ketononatrienedioate, respectively. The chain is 2,3-dihydroxyphenylpropionate/2,3-dihydroxicinnamic acid 1,2-dioxygenase from Azotobacter vinelandii (strain DJ / ATCC BAA-1303).